The following is a 67-amino-acid chain: MGNIKQTFIKRTARELFDRYPDKFTRDFEHNKKMVAELTNVTSKTIRNRIAGYITRLVRMKEEGKIL.

Belongs to the eukaryotic ribosomal protein eS17 family. In terms of assembly, part of the 30S ribosomal subunit.

The polypeptide is Small ribosomal subunit protein eS17 (Thermococcus kodakarensis (strain ATCC BAA-918 / JCM 12380 / KOD1) (Pyrococcus kodakaraensis (strain KOD1))).